Here is a 500-residue protein sequence, read N- to C-terminus: Probable malate:quinone oxidoreductase (500 aa).

This sequence belongs to the MQO family. It depends on FAD as a cofactor.

It catalyses the reaction (S)-malate + a quinone = a quinol + oxaloacetate. It participates in carbohydrate metabolism; tricarboxylic acid cycle; oxaloacetate from (S)-malate (quinone route): step 1/1. The polypeptide is Probable malate:quinone oxidoreductase (Bacillus cytotoxicus (strain DSM 22905 / CIP 110041 / 391-98 / NVH 391-98)).